A 127-amino-acid polypeptide reads, in one-letter code: Large ribosomal subunit protein bL17 (127 aa).

The protein belongs to the bacterial ribosomal protein bL17 family. In terms of assembly, part of the 50S ribosomal subunit. Contacts protein L32.

In Alcanivorax borkumensis (strain ATCC 700651 / DSM 11573 / NCIMB 13689 / SK2), this protein is Large ribosomal subunit protein bL17.